Here is a 178-residue protein sequence, read N- to C-terminus: Crossover junction endodeoxyribonuclease RuvC (178 aa).

Catalysis depends on residues aspartate 11, glutamate 71, and aspartate 143. Positions 11, 71, and 143 each coordinate Mg(2+).

The protein belongs to the RuvC family. In terms of assembly, homodimer which binds Holliday junction (HJ) DNA. The HJ becomes 2-fold symmetrical on binding to RuvC with unstacked arms; it has a different conformation from HJ DNA in complex with RuvA. In the full resolvosome a probable DNA-RuvA(4)-RuvB(12)-RuvC(2) complex forms which resolves the HJ. Mg(2+) is required as a cofactor.

It is found in the cytoplasm. The catalysed reaction is Endonucleolytic cleavage at a junction such as a reciprocal single-stranded crossover between two homologous DNA duplexes (Holliday junction).. Its function is as follows. The RuvA-RuvB-RuvC complex processes Holliday junction (HJ) DNA during genetic recombination and DNA repair. Endonuclease that resolves HJ intermediates. Cleaves cruciform DNA by making single-stranded nicks across the HJ at symmetrical positions within the homologous arms, yielding a 5'-phosphate and a 3'-hydroxyl group; requires a central core of homology in the junction. The consensus cleavage sequence is 5'-(A/T)TT(C/G)-3'. Cleavage occurs on the 3'-side of the TT dinucleotide at the point of strand exchange. HJ branch migration catalyzed by RuvA-RuvB allows RuvC to scan DNA until it finds its consensus sequence, where it cleaves and resolves the cruciform DNA. This is Crossover junction endodeoxyribonuclease RuvC from Neisseria meningitidis serogroup B (strain ATCC BAA-335 / MC58).